A 173-amino-acid chain; its full sequence is MALRPSKCYREINKPAYTRKKYIRAVPQPKVVHYVNGNKGGDFPVEVHLVVKDDIQIRHNALESARIVGNKYTQNKCGRLGYKFQIRVYPHQVLRENKMASGAGADRISDGMRLSFGKAVGTAARVRKGQKIITISTTPENVIHAKEALRRCNMKMPVKCKIVIGKGAELVKN.

It belongs to the universal ribosomal protein uL16 family.

In Methanococcus aeolicus (strain ATCC BAA-1280 / DSM 17508 / OCM 812 / Nankai-3), this protein is Large ribosomal subunit protein uL16.